The following is a 160-amino-acid chain: MMIIVSSIIAVLMAVAVMVVRIKSSDKPVSPKKIILPPIFMSTGALMFLFPVFWVTGAEFLEAFTLGVIFSIFLIKTSKFEIKNNEIYMKRSKAFVFILVGLLVIRIVMKSILSTSIDYGALSGMFWILAFGMIVPWRIAMYLSYRKLHNELQSSNIQMN.

5 helical membrane passes run 2–22, 34–54, 55–75, 94–114, and 117–137; these read MIIVSSIIAVLMAVAVMVVRI, IILPPIFMSTGALMFLFPVFW, VTGAEFLEAFTLGVIFSIFLI, AFVFILVGLLVIRIVMKSILS, and IDYGALSGMFWILAFGMIVPW.

The protein localises to the cell membrane. The chain is Protein CcdC (ccdC) from Bacillus subtilis (strain 168).